The sequence spans 230 residues: Cytochrome c oxidase subunit 2 (230 aa).

Topologically, residues 1-14 (MAHPSQLGFQDAAS) are mitochondrial intermembrane. A helical transmembrane segment spans residues 15 to 45 (PVMEELLHFHDHALMIVLLISTLVLYIIVAM). Residues 46 to 59 (VSTKLTNKYILDSQ) are Mitochondrial matrix-facing. The chain crosses the membrane as a helical span at residues 60–87 (EIEIVWTVLPAVILILIALPSLRILYLM). At 88–230 (DEINDPHLTI…KWSTMMLEDA (143 aa)) the chain is on the mitochondrial intermembrane side. 6 residues coordinate Cu cation: His-161, Cys-196, Glu-198, Cys-200, His-204, and Met-207. Glu-198 lines the Mg(2+) pocket.

The protein belongs to the cytochrome c oxidase subunit 2 family. As to quaternary structure, component of the cytochrome c oxidase (complex IV, CIV), a multisubunit enzyme composed of 14 subunits. The complex is composed of a catalytic core of 3 subunits MT-CO1, MT-CO2 and MT-CO3, encoded in the mitochondrial DNA, and 11 supernumerary subunits COX4I, COX5A, COX5B, COX6A, COX6B, COX6C, COX7A, COX7B, COX7C, COX8 and NDUFA4, which are encoded in the nuclear genome. The complex exists as a monomer or a dimer and forms supercomplexes (SCs) in the inner mitochondrial membrane with NADH-ubiquinone oxidoreductase (complex I, CI) and ubiquinol-cytochrome c oxidoreductase (cytochrome b-c1 complex, complex III, CIII), resulting in different assemblies (supercomplex SCI(1)III(2)IV(1) and megacomplex MCI(2)III(2)IV(2)). Found in a complex with TMEM177, COA6, COX18, COX20, SCO1 and SCO2. Interacts with TMEM177 in a COX20-dependent manner. Interacts with COX20. Interacts with COX16. Requires Cu cation as cofactor.

Its subcellular location is the mitochondrion inner membrane. The catalysed reaction is 4 Fe(II)-[cytochrome c] + O2 + 8 H(+)(in) = 4 Fe(III)-[cytochrome c] + 2 H2O + 4 H(+)(out). Its function is as follows. Component of the cytochrome c oxidase, the last enzyme in the mitochondrial electron transport chain which drives oxidative phosphorylation. The respiratory chain contains 3 multisubunit complexes succinate dehydrogenase (complex II, CII), ubiquinol-cytochrome c oxidoreductase (cytochrome b-c1 complex, complex III, CIII) and cytochrome c oxidase (complex IV, CIV), that cooperate to transfer electrons derived from NADH and succinate to molecular oxygen, creating an electrochemical gradient over the inner membrane that drives transmembrane transport and the ATP synthase. Cytochrome c oxidase is the component of the respiratory chain that catalyzes the reduction of oxygen to water. Electrons originating from reduced cytochrome c in the intermembrane space (IMS) are transferred via the dinuclear copper A center (CU(A)) of subunit 2 and heme A of subunit 1 to the active site in subunit 1, a binuclear center (BNC) formed by heme A3 and copper B (CU(B)). The BNC reduces molecular oxygen to 2 water molecules using 4 electrons from cytochrome c in the IMS and 4 protons from the mitochondrial matrix. This chain is Cytochrome c oxidase subunit 2 (mt-co2), found in Salmo salar (Atlantic salmon).